A 144-amino-acid polypeptide reads, in one-letter code: uncharacterized protein (144 aa).

A coiled-coil region spans residues glutamate 48–leucine 119.

This is an uncharacterized protein from Archaeoglobus fulgidus (strain ATCC 49558 / DSM 4304 / JCM 9628 / NBRC 100126 / VC-16).